Reading from the N-terminus, the 129-residue chain is Fluoride-specific ion channel FluC (129 aa).

4 helical membrane-spanning segments follow: residues 8 to 28 (ILLV…VALW), 34 to 54 (AVFP…IGFI), 70 to 90 (IFLV…MIEH), and 102 to 122 (AALY…LGII). Residues Gly-78 and Thr-81 each coordinate Na(+).

This sequence belongs to the fluoride channel Fluc/FEX (TC 1.A.43) family.

It localises to the cell inner membrane. The enzyme catalyses fluoride(in) = fluoride(out). With respect to regulation, na(+) is not transported, but it plays an essential structural role and its presence is essential for fluoride channel function. In terms of biological role, fluoride-specific ion channel. Important for reducing fluoride concentration in the cell, thus reducing its toxicity. The protein is Fluoride-specific ion channel FluC of Chlorobium chlorochromatii (strain CaD3).